We begin with the raw amino-acid sequence, 360 residues long: NAD(P)H-quinone oxidoreductase subunit 1, chloroplastic (360 aa).

The next 9 helical transmembrane spans lie at 27 to 47 (IWIF…VLVI), 98 to 118 (FSIG…VIPF), 129 to 149 (IGIF…LMSG), 165 to 185 (AAQS…ISLL), 203 to 223 (FWGW…ISSL), 248 to 268 (YSGI…LISS), 269 to 289 (LFVT…ISIL), 297 to 317 (IFGT…FLFI), and 340 to 360 (FLLP…LFSL).

This sequence belongs to the complex I subunit 1 family. As to quaternary structure, NDH is composed of at least 16 different subunits, 5 of which are encoded in the nucleus.

It localises to the plastid. The protein resides in the chloroplast thylakoid membrane. It catalyses the reaction a plastoquinone + NADH + (n+1) H(+)(in) = a plastoquinol + NAD(+) + n H(+)(out). The enzyme catalyses a plastoquinone + NADPH + (n+1) H(+)(in) = a plastoquinol + NADP(+) + n H(+)(out). In terms of biological role, NDH shuttles electrons from NAD(P)H:plastoquinone, via FMN and iron-sulfur (Fe-S) centers, to quinones in the photosynthetic chain and possibly in a chloroplast respiratory chain. The immediate electron acceptor for the enzyme in this species is believed to be plastoquinone. Couples the redox reaction to proton translocation, and thus conserves the redox energy in a proton gradient. The polypeptide is NAD(P)H-quinone oxidoreductase subunit 1, chloroplastic (Olimarabidopsis pumila (Dwarf rocket)).